A 222-amino-acid chain; its full sequence is UPF0758 protein Cpar_0627 (222 aa).

The MPN domain occupies lysine 100–leucine 222. Histidine 171, histidine 173, and aspartate 184 together coordinate Zn(2+). A JAMM motif motif is present at residues histidine 171–aspartate 184.

It belongs to the UPF0758 family.

This is UPF0758 protein Cpar_0627 from Chlorobaculum parvum (strain DSM 263 / NCIMB 8327) (Chlorobium vibrioforme subsp. thiosulfatophilum).